A 594-amino-acid chain; its full sequence is UvrABC system protein C (594 aa).

The 78-residue stretch at L17 to I94 folds into the GIY-YIG domain. The 36-residue stretch at K199–L234 folds into the UVR domain.

The protein belongs to the UvrC family. Interacts with UvrB in an incision complex.

The protein resides in the cytoplasm. In terms of biological role, the UvrABC repair system catalyzes the recognition and processing of DNA lesions. UvrC both incises the 5' and 3' sides of the lesion. The N-terminal half is responsible for the 3' incision and the C-terminal half is responsible for the 5' incision. The polypeptide is UvrABC system protein C (Staphylococcus epidermidis (strain ATCC 12228 / FDA PCI 1200)).